Here is a 365-residue protein sequence, read N- to C-terminus: MDKMFEQLDGLLDRYAELQELMSDPEVINETSRYMELSKEEAGLREIVGKYTRLKEVLSEVTENEELLRETTDSEMTELVKADLEELQTEKAQLEQEIKILMLPTDPNDEKNIIMEIRGAAGGDEASLFAGDLLNMYQRYAESQNWQTEIIDETATEVGGFKEVAMMITGKNVYSKLKYENGAHRVQRIPKTESQGRVHTSTATVAVMPEYDGVDVELEAKDIRVDVYRASGAGGQHINKTSSAVRMTHIPTGIVVAMQDQRSQQQNRVKAMKILQARVYDYYESQNQSEYDSSRKSAVGSGDRSERIRTYNYPQNRVTDHRIGLTLNKLDRIMNGELGDVIDALILFDQTEKLEQLQDGTAHLS.

Residue Gln236 is modified to N5-methylglutamine.

Belongs to the prokaryotic/mitochondrial release factor family. Post-translationally, methylated by PrmC. Methylation increases the termination efficiency of RF1.

The protein localises to the cytoplasm. Functionally, peptide chain release factor 1 directs the termination of translation in response to the peptide chain termination codons UAG and UAA. This chain is Peptide chain release factor 1, found in Latilactobacillus sakei subsp. sakei (strain 23K) (Lactobacillus sakei subsp. sakei).